The sequence spans 317 residues: Glycine--tRNA ligase alpha subunit (317 aa).

Belongs to the class-II aminoacyl-tRNA synthetase family. In terms of assembly, tetramer of two alpha and two beta subunits.

The protein resides in the cytoplasm. It carries out the reaction tRNA(Gly) + glycine + ATP = glycyl-tRNA(Gly) + AMP + diphosphate. The sequence is that of Glycine--tRNA ligase alpha subunit from Pseudomonas fluorescens (strain SBW25).